We begin with the raw amino-acid sequence, 324 residues long: Transmembrane protein 171 (324 aa).

Helical transmembrane passes span 22–42 (IFCF…LSIF), 57–77 (MVLK…VILA), 113–133 (LIFG…GIWV), and 160–180 (FLSL…FFVV). Positions 229–239 (PESSASAVAES) are enriched in low complexity. 2 disordered regions span residues 229–248 (PESS…LLPN) and 279–304 (YTIS…PPRY). Positions 279 to 291 (YTISGTNSSSEAS) are enriched in polar residues.

The protein resides in the membrane. The sequence is that of Transmembrane protein 171 (TMEM171) from Homo sapiens (Human).